Here is a 752-residue protein sequence, read N- to C-terminus: Protein GCN20 (752 aa).

Ala2 carries the N-acetylalanine modification. ABC transporter domains follow at residues 199–464 (IHID…RKNA) and 532–748 (IQLQ…AAGV). Residues 232-239 (GQNGIGKS) and 565-572 (GANGCGKT) contribute to the ATP site.

The protein belongs to the ABC transporter superfamily. ABCF family. EF3 subfamily. Interacts (via N-terminus) with GCN1 (via C-terminus); this interaction stimulates GCN2 kinase activity in response to amino acid starvation. The GCN1-GCN20 complex interacts with GCN2 on translating ribosomes in amino acid-starved cells; this association stimulates GCN2 kinase activation by uncharged tRNAs, and hence allowing GCN4 translational activation and derepression of amino acid biosynthetic genes. Associates with ribosomes.

Functionally, acts as a positive activator of the GCN2 protein kinase activity in response to in response to low amino acid, carbon, or purine availability. Component of the GCN1-GCN20 complex that forms a complex with GCN2 on translating ribosomes; during this process, GCN20 helps GCN1 to act as a chaperone to facilitate delivery of uncharged tRNAs that enter the A site of ribosomes to the tRNA-binding domain of GCN2, and hence stimulating GCN2 kinase activity. Participates in gene-specific mRNA translation activation, such as the transcriptional activator GCN4, by promoting the GCN2-mediated phosphorylation of eukaryotic translation initiation factor 2 (eIF-2-alpha/SUI2) on 'Ser-52', and hence allowing GCN4-mediated reprogramming of amino acid biosynthetic gene expression to alleviate nutrient depletion. The protein is Protein GCN20 of Saccharomyces cerevisiae (strain ATCC 204508 / S288c) (Baker's yeast).